The following is a 165-amino-acid chain: Shikimate kinase (165 aa).

11–16 (GAGKTT) is a binding site for ATP. Position 15 (Thr-15) interacts with Mg(2+). Asp-33, Arg-57, and Gly-78 together coordinate substrate. Arg-116 provides a ligand contact to ATP. Arg-134 is a binding site for substrate.

It belongs to the shikimate kinase family. Monomer. Requires Mg(2+) as cofactor.

It localises to the cytoplasm. It carries out the reaction shikimate + ATP = 3-phosphoshikimate + ADP + H(+). It participates in metabolic intermediate biosynthesis; chorismate biosynthesis; chorismate from D-erythrose 4-phosphate and phosphoenolpyruvate: step 5/7. Functionally, catalyzes the specific phosphorylation of the 3-hydroxyl group of shikimic acid using ATP as a cosubstrate. The polypeptide is Shikimate kinase (Bacillus cytotoxicus (strain DSM 22905 / CIP 110041 / 391-98 / NVH 391-98)).